A 391-amino-acid polypeptide reads, in one-letter code: GTPase Obg (391 aa).

The region spanning M1 to I159 is the Obg domain. Residues A160–D327 enclose the OBG-type G domain. GTP is bound by residues G166–S173, F191–H195, D212–G215, S279–D282, and S308–I310. Mg(2+) is bound by residues S173 and T193. The segment at T352 to R391 is disordered. The span at D366–E382 shows a compositional bias: acidic residues.

Belongs to the TRAFAC class OBG-HflX-like GTPase superfamily. OBG GTPase family. Monomer. Mg(2+) serves as cofactor.

Its subcellular location is the cytoplasm. An essential GTPase which binds GTP, GDP and possibly (p)ppGpp with moderate affinity, with high nucleotide exchange rates and a fairly low GTP hydrolysis rate. Plays a role in control of the cell cycle, stress response, ribosome biogenesis and in those bacteria that undergo differentiation, in morphogenesis control. This chain is GTPase Obg, found in Rhodospirillum rubrum (strain ATCC 11170 / ATH 1.1.1 / DSM 467 / LMG 4362 / NCIMB 8255 / S1).